The following is a 501-amino-acid chain: MTEQVLPDENKLIAERRAKLEHIRANCPANGHPNNFDRKHKAADIQAEFGNNTKEELEGMGIQRSIAGRIMAKRGPFLVIQDVSGRIQAYAGKDVQKDLKATFQGLDIGDIIGVTGQLHLSGKGDLYVNMEEYQLLTKALRPLPEKFHGLTDQETRYRQRYVDLIVNEDSRNAFIMRSKVVSAIRNFMVKKEFMEVETPMMHSIPGGASARPFETHHNALDIAMYLRIAPELYLKRLVVGGFERVFEINRNFRNEGLSPRHNPEFTMMEFYMAYADFNDLMDLTEEMLSSIATELCGSPQLPYGEHTVDFGGPYARLSMLDAIKKYNPDNATIQSMTYEEVKDVEFMRDLAKSLGMTIEKFWTCGQLLEEIFGETAETQLMQPTFITGYPADISPLARRNDDNHFITDRFEFFIGGREVANGFSELNDAEDQDNRFKAQVDAKDAGDDEAMFYDADYITALEHGLPPTAGQGIGIDRLVMLFTNTHTIRDVILFPAMRPQA.

The Mg(2+) site is built by glutamate 411 and glutamate 418.

This sequence belongs to the class-II aminoacyl-tRNA synthetase family. Homodimer. It depends on Mg(2+) as a cofactor.

It is found in the cytoplasm. It carries out the reaction tRNA(Lys) + L-lysine + ATP = L-lysyl-tRNA(Lys) + AMP + diphosphate. In Shewanella woodyi (strain ATCC 51908 / MS32), this protein is Lysine--tRNA ligase.